We begin with the raw amino-acid sequence, 718 residues long: Acetolactate synthase, mitochondrial (718 aa).

2 disordered regions span residues 1–53 and 75–99; these read MLTR…YDTP and QSSA…QAAP. Polar residues predominate over residues 32–45; that stretch reads RYSNNIHTSSTQNA. Positions 76–99 are enriched in low complexity; it reads SSASTAAASPAVRPQPAQHFQAAP. Glu173 contributes to the thiamine diphosphate binding site. Arg275 provides a ligand contact to FAD. The interval 301-326 is disordered; the sequence is VQPGHSPYLPSNPLNPSSQPSDPLPG. Over residues 306–325 the composition is skewed to low complexity; that stretch reads SPYLPSNPLNPSSQPSDPLP. FAD is bound by residues 397 to 418 and 449 to 468; these read HGSA…LGVR and EIQP…VLGD. The tract at residues 541 to 621 is thiamine pyrophosphate binding; that stretch reads QHQMWACQYY…VKVLLFNNEF (81 aa). Mg(2+) contacts are provided by Asp592 and Asn619.

Belongs to the TPP enzyme family. Mg(2+) is required as a cofactor. The cofactor is thiamine diphosphate.

Its subcellular location is the mitochondrion. It catalyses the reaction 2 pyruvate + H(+) = (2S)-2-acetolactate + CO2. The protein operates within amino-acid biosynthesis; L-isoleucine biosynthesis; L-isoleucine from 2-oxobutanoate: step 1/4. It functions in the pathway amino-acid biosynthesis; L-valine biosynthesis; L-valine from pyruvate: step 1/4. This Cryptococcus neoformans var. grubii serotype A (strain H99 / ATCC 208821 / CBS 10515 / FGSC 9487) (Filobasidiella neoformans var. grubii) protein is Acetolactate synthase, mitochondrial (ILV2).